Here is a 120-residue protein sequence, read N- to C-terminus: ATP-dependent Clp protease adapter protein ClpS (120 aa).

It belongs to the ClpS family. Binds to the N-terminal domain of the chaperone ClpA.

Involved in the modulation of the specificity of the ClpAP-mediated ATP-dependent protein degradation. The protein is ATP-dependent Clp protease adapter protein ClpS of Pseudomonas syringae pv. tomato (strain ATCC BAA-871 / DC3000).